The following is an 83-amino-acid chain: uncharacterized protein (83 aa).

The segment at 15 to 36 (RLKNGRGNKTMSESDYNTSDSG) is disordered. Polar residues predominate over residues 21-35 (GNKTMSESDYNTSDS).

This is an uncharacterized protein from Aedes vexans (Inland floodwater mosquito).